Consider the following 290-residue polypeptide: Acetyl-coenzyme A carboxylase carboxyl transferase subunit beta (290 aa).

The CoA carboxyltransferase N-terminal domain maps to 28 to 290; it reads VMTKCPQCKK…GGGESGWWRN (263 aa). Cys32, Cys35, Cys51, and Cys54 together coordinate Zn(2+). The C4-type zinc finger occupies 32 to 54; it reads CPQCKKIMYTKELVKNLRVCLSC.

This sequence belongs to the AccD/PCCB family. As to quaternary structure, acetyl-CoA carboxylase is a heterohexamer composed of biotin carboxyl carrier protein (AccB), biotin carboxylase (AccC) and two subunits each of ACCase subunit alpha (AccA) and ACCase subunit beta (AccD). Zn(2+) serves as cofactor.

It localises to the cytoplasm. It carries out the reaction N(6)-carboxybiotinyl-L-lysyl-[protein] + acetyl-CoA = N(6)-biotinyl-L-lysyl-[protein] + malonyl-CoA. The protein operates within lipid metabolism; malonyl-CoA biosynthesis; malonyl-CoA from acetyl-CoA: step 1/1. In terms of biological role, component of the acetyl coenzyme A carboxylase (ACC) complex. Biotin carboxylase (BC) catalyzes the carboxylation of biotin on its carrier protein (BCCP) and then the CO(2) group is transferred by the transcarboxylase to acetyl-CoA to form malonyl-CoA. This chain is Acetyl-coenzyme A carboxylase carboxyl transferase subunit beta, found in Geobacillus thermodenitrificans (strain NG80-2).